A 249-amino-acid chain; its full sequence is tRNA uridine(34) hydroxylase (249 aa).

Positions 124–218 (TKQDVIVIDT…YLEDTQNKNN (95 aa)) constitute a Rhodanese domain. Cys-178 functions as the Cysteine persulfide intermediate in the catalytic mechanism.

This sequence belongs to the TrhO family.

It carries out the reaction uridine(34) in tRNA + AH2 + O2 = 5-hydroxyuridine(34) in tRNA + A + H2O. In terms of biological role, catalyzes oxygen-dependent 5-hydroxyuridine (ho5U) modification at position 34 in tRNAs. This Rickettsia canadensis (strain McKiel) protein is tRNA uridine(34) hydroxylase.